A 704-amino-acid polypeptide reads, in one-letter code: DNA ligase (704 aa).

NAD(+)-binding positions include 43-47 (DADYD), 92-93 (SL), and Glu-124. The active-site N6-AMP-lysine intermediate is Lys-126. The NAD(+) site is built by Arg-147, Glu-182, Lys-298, and Lys-322. Residues Cys-427, Cys-430, Cys-445, and Cys-451 each contribute to the Zn(2+) site. In terms of domain architecture, BRCT spans 625-704 (PVASPVAGRI…DGWLRLIGDA (80 aa)).

Belongs to the NAD-dependent DNA ligase family. LigA subfamily. Mg(2+) serves as cofactor. The cofactor is Mn(2+).

The enzyme catalyses NAD(+) + (deoxyribonucleotide)n-3'-hydroxyl + 5'-phospho-(deoxyribonucleotide)m = (deoxyribonucleotide)n+m + AMP + beta-nicotinamide D-nucleotide.. Functionally, DNA ligase that catalyzes the formation of phosphodiester linkages between 5'-phosphoryl and 3'-hydroxyl groups in double-stranded DNA using NAD as a coenzyme and as the energy source for the reaction. It is essential for DNA replication and repair of damaged DNA. This chain is DNA ligase, found in Cereibacter sphaeroides (strain KD131 / KCTC 12085) (Rhodobacter sphaeroides).